A 232-amino-acid polypeptide reads, in one-letter code: Ferric nitrobindin-like protein (232 aa).

Residues 1–10 (MSENETSKTG) show a composition bias toward polar residues. The disordered stretch occupies residues 1–33 (MSENETSKTGGNAGVPGSGADAPSLSDSPAISG). The GXWXGXG motif lies at 85–91 (GVWRGEG).

The protein belongs to the nitrobindin family.

This is Ferric nitrobindin-like protein from Corynebacterium efficiens (strain DSM 44549 / YS-314 / AJ 12310 / JCM 11189 / NBRC 100395).